A 161-amino-acid polypeptide reads, in one-letter code: Nucleotide-binding protein Rpic_2826 (161 aa).

The protein belongs to the YajQ family.

In terms of biological role, nucleotide-binding protein. The polypeptide is Nucleotide-binding protein Rpic_2826 (Ralstonia pickettii (strain 12J)).